Here is a 625-residue protein sequence, read N- to C-terminus: Arginine--tRNA ligase (625 aa).

Positions 128–138 (VNPTKPLHMGH) match the 'HIGH' region motif.

This sequence belongs to the class-I aminoacyl-tRNA synthetase family.

The protein resides in the cytoplasm. The catalysed reaction is tRNA(Arg) + L-arginine + ATP = L-arginyl-tRNA(Arg) + AMP + diphosphate. The polypeptide is Arginine--tRNA ligase (argS) (Pyrococcus abyssi (strain GE5 / Orsay)).